A 2590-amino-acid chain; its full sequence is 5-methylorsellinic acid synthase (2590 aa).

The segment at 6-255 is N-terminal acylcarrier protein transacylase domain (SAT); that stretch reads LLCGSQAIQW…HNQVNRELFA (250 aa). The region spanning 369-784 is the Ketosynthase family 3 (KS3) domain; the sequence is GDSIAIVGMG…GSNAALIVTQ (416 aa). Residues Cys534, His669, and His707 each act as for beta-ketoacyl synthase activity in the active site. A malonyl-CoA:ACP transacylase (MAT) domain region spans residues 891 to 1191; sequence LAFGGQTGNV…HAVNLGGPEP (301 aa). The For acyl/malonyl transferase activity role is filled by Ser978. An N-terminal hotdog fold region spans residues 1263 to 1393; that stretch reads PKLVSFVKYL…GTVNISSLTS (131 aa). The region spanning 1263-1569 is the PKS/mFAS DH domain; that stretch reads PKLVSFVKYL…FAKVPTASLK (307 aa). Positions 1267 to 1568 are product template (PT) domain; it reads SFVKYLDSNR…RFAKVPTASL (302 aa). The Proton acceptor; for dehydratase activity role is filled by His1297. Residues 1421–1569 are C-terminal hotdog fold; it reads TSAIQGSLVY…FAKVPTASLK (149 aa). Residue Asp1481 is the Proton donor; for dehydratase activity of the active site. The interval 1587 to 1612 is disordered; it reads LKVTEPSANVPKAQPVSTYPKPMKPA. 2 consecutive Carrier domains span residues 1617–1691 and 1736–1812; these read AQIR…ASGT and SAQA…IPKP. Ser1651 and Ser1772 each carry O-(pantetheine 4'-phosphoryl)serine. Positions 1980–2212 are methyltransferase (CMeT) domain; the sequence is QHRGEHKLLN…GFRHVDWSDD (233 aa). The interval 2282–2590 is thioesterase (TE) domain; it reads LMIHGGGHIM…EGYEFLLRHL (309 aa).

The enzyme catalyses 3 malonyl-CoA + acetyl-CoA + S-adenosyl-L-methionine + H(+) = 5-methylorsellinate + S-adenosyl-L-homocysteine + 3 CO2 + 4 CoA. The protein operates within secondary metabolite biosynthesis. Functionally, non-reducing polyketide synthase; part of the cluster A that mediates the biosynthesis of azasperpyranones, members of the azaphilone family that exhibit anti-cancer activities. Azasperpyranones are synthesized by 2 clusters, A and B. Cluster A is responsible for the production of the polyhydric phenol moiety while the azaphilonoid scaffold is produced by the cluster B. The non-reducing polyketide synthase ATEG_03629 produces 5-methyl orsellinic acid, which is then reduced to 5-methyl orsellinic aldehyde by the NRPS-like protein ATEG_03630. 5-methyl orsellinic aldehyde is then first hydroxylated by the FAD-dependent monooxygenase ATEG_03635 and subsequently hydroxylated by the cytochrome P450 monooxygenase ATEG_03631 to produce the unstable polyhydric phenol precursor of azasperpyranones. On the other hand, the polyketide synthase ATEG_07659 is responsible for producing the 3,5-dimethyloctadienone moiety from acetyl-CoA, three malonyl-CoA, and two S-adenosyl methionines (SAM). The 3,5-dimethyloctadienone moiety is then loaded onto the SAT domain of ATEG_07661 and extended with four malonyl-CoA and one SAM, which leads to the formation of 2,4-dihydroxy-6-(5,7-dimethyl-2-oxo-trans-3-trans-5-nonadienyl)-3-methylbenzaldehyde (compound 8) after reductive release and aldol condensation. The FAD-dependent monooxygenase ATEG_07662 is the next enzyme in the biosynthesis sequence and hydroxylates the side chain at the benzylic position of compound 8. In Aspergillus nidulans, afoF, the ortholog of the FAD-dependent oxygenase ATEG_07660, is the key enzyme for the biosynthesis of asperfuranone by catalyzing the hydroxylation at C-8 of to prevent the formation of a six-membered ring hemiacetal intermediate and thus facilitating the formation of a five-membered ring to produce asperfuranone. In Aspergillus terreus, ATEG_07660 is probably not functional, which leads to the formation of the six-membered ring hemiacetal intermediate presperpyranone instead of asperfuranone. Finally, ATEG_03636 is involved in the condensation of the polyhydric phenol moiety produced by cluster A and the perasperpyranone precursor produced by cluster B, to yield azasperpyranone A. Further modifications of azasperpyranone A result in the production of derivatives, including azasperpyranone B to F. In Aspergillus terreus (strain NIH 2624 / FGSC A1156), this protein is 5-methylorsellinic acid synthase.